Consider the following 408-residue polypeptide: S-adenosylmethionine synthase (408 aa).

Histidine 16 lines the ATP pocket. Residue aspartate 18 participates in Mg(2+) binding. Glutamate 44 provides a ligand contact to K(+). 2 residues coordinate L-methionine: glutamate 57 and glutamine 100. Residues 100–110 form a flexible loop region; the sequence is QSPEINQGVSR. ATP contacts are provided by residues 177–179, aspartate 257, 263–264, alanine 280, and lysine 284; these read DGK and RK. Aspartate 257 contributes to the L-methionine binding site. Lysine 288 serves as a coordination point for L-methionine.

It belongs to the AdoMet synthase family. In terms of assembly, homotetramer; dimer of dimers. Mg(2+) is required as a cofactor. The cofactor is K(+).

The protein resides in the cytoplasm. It carries out the reaction L-methionine + ATP + H2O = S-adenosyl-L-methionine + phosphate + diphosphate. Its pathway is amino-acid biosynthesis; S-adenosyl-L-methionine biosynthesis; S-adenosyl-L-methionine from L-methionine: step 1/1. In terms of biological role, catalyzes the formation of S-adenosylmethionine (AdoMet) from methionine and ATP. The overall synthetic reaction is composed of two sequential steps, AdoMet formation and the subsequent tripolyphosphate hydrolysis which occurs prior to release of AdoMet from the enzyme. The protein is S-adenosylmethionine synthase of Bifidobacterium animalis subsp. lactis (strain AD011).